Consider the following 644-residue polypeptide: SURP and G-patch domain-containing protein 1 (644 aa).

Over residues 44–54 (REIEARMEQKA) the composition is skewed to basic and acidic residues. Disordered regions lie at residues 44-74 (REIE…ADAQ) and 98-122 (AQAS…KRPL). Thr128 carries the phosphothreonine modification. Residues 188–230 (VIEKLARFVAEGGPELEKVAMEDYKDNPAFTFLHDKNSREFLY) form an SURP motif 1 repeat. Residue Ser253 is modified to Phosphoserine. The SURP motif 2 repeat unit spans residues 263–306 (LAEKLARFIADGGPEVETIALQNNRENQAFSFLYDPNSQGYRYY). Disordered stretches follow at residues 316–342 (AKAG…PEAL) and 360–412 (PAVN…PSPL). The residue at position 323 (Ser323) is a Phosphoserine. The segment covering 360–369 (PAVNPTPSIP) has biased composition (pro residues). Positions 379 to 385 (KRKRKSR) match the Nuclear localization signal motif. Phosphoserine occurs at positions 408, 410, 413, and 484. Residues 561 to 608 (VENIGYQMLMKMGWKEGEGLGTEGQGIKNPVNKGATTIDGAGFGIDRP) enclose the G-patch domain.

Component of the spliceosome.

Its subcellular location is the nucleus. Functionally, plays a role in pre-mRNA splicing. In Rattus norvegicus (Rat), this protein is SURP and G-patch domain-containing protein 1 (Sugp1).